Reading from the N-terminus, the 385-residue chain is WD repeat-containing protein 74 (385 aa).

WD repeat units follow at residues 40–80, 83–122, 128–168, 179–220, 224–266, and 267–306; these read RREE…FQGQ, CPGG…ASSD, RVGP…EPLF, DLRV…RRPV, TYGE…GCLK, and GLAG…GLEH. A Phosphoserine modification is found at Ser-214. Residue Lys-311 is modified to N6-methyllysine. The required for nucleolar and nuclear location stretch occupies residues 320-385; sequence SGRDNWEDEP…KKKRPGSTSS (66 aa). Positions 323–385 are disordered; it reads DNWEDEPQEP…KKKRPGSTSS (63 aa). The segment covering 372-385 has biased composition (basic residues); that stretch reads ARRRKKKRPGSTSS.

Isoform 1 interacts (through WDR repeats) with NVL; the interaction is independent of RNA or pre-60S ribosome particles. Isoform 2 does not interact with NVL. Interacts with MTREX; the interaction dissociation in a late stage of rRNA synthesis is required for appropriate maturation of pre-60S particles and depends on the ATPase activity of NVL.

It is found in the nucleus. Its subcellular location is the nucleolus. Its function is as follows. Regulatory protein of the MTREX-exosome complex involved in the synthesis of the 60S ribosomal subunit. Participates in an early cleavage of the pre-rRNA processing pathway in cooperation with NVL. This is WD repeat-containing protein 74 (WDR74) from Bos taurus (Bovine).